The primary structure comprises 557 residues: MKELLYMELAEVYHRLESTTKRLEKTEILAELLRSVDKELLPDVTILMLGRVFPIWSEEELGVGIKLLMKAISLVVGVSMDEIEDEIREQGDIGLASEKLFSRKTQTTFFSQPLTVEFVYSRLKALASASGDRAQSKKINILVEVLSQAKPLEARYITRTVLEELRVGVAEGIIRDAIARAFEVDPALVERAHMLTNDLGMVAAVAREEGEPGLGRLNLEPGRPVKPMLAQLASSIESAITELGRAFCETKYDGIRVQIHRCGDEVSIFTRRLENITAAVPEILEGVEEALPADDYIVEGEIIVTMDGRPASFQYILQRVRRKYDVDRLTREVPLSLFLFDVLYHRGPLIDEPLWHRREVLESILSEIPGRVEASRMVDVGPDNLDDALWLFKESIREGHEGIMIKDTEAPYIPGIRGKKMLKFKAEPETLDLIVVGGTYGRGKRAHLVGSYLLAVRDEKSGELKTIAHVATGLDDQTLQDLSERMENLKVERRGRKIRVKPEIILEVAYSEIVRSPEYESGYSLRFPVVKRIRDDLSPDDIDTLGRVISLFKQGFS.

E249 lines the ATP pocket. Residue K251 is the N6-AMP-lysine intermediate of the active site. ATP contacts are provided by R256, R271, E301, F340, R417, and K423.

This sequence belongs to the ATP-dependent DNA ligase family. Mg(2+) is required as a cofactor.

The enzyme catalyses ATP + (deoxyribonucleotide)n-3'-hydroxyl + 5'-phospho-(deoxyribonucleotide)m = (deoxyribonucleotide)n+m + AMP + diphosphate.. In terms of biological role, DNA ligase that seals nicks in double-stranded DNA during DNA replication, DNA recombination and DNA repair. This Methanothermobacter thermautotrophicus (Methanobacterium thermoformicicum) protein is DNA ligase.